We begin with the raw amino-acid sequence, 126 residues long: RutC family protein SSO3206 (126 aa).

Belongs to the RutC family.

In Saccharolobus solfataricus (strain ATCC 35092 / DSM 1617 / JCM 11322 / P2) (Sulfolobus solfataricus), this protein is RutC family protein SSO3206.